A 163-amino-acid polypeptide reads, in one-letter code: Large ribosomal subunit protein uL10 (163 aa).

The protein belongs to the universal ribosomal protein uL10 family. As to quaternary structure, part of the ribosomal stalk of the 50S ribosomal subunit. The N-terminus interacts with L11 and the large rRNA to form the base of the stalk. The C-terminus forms an elongated spine to which L12 dimers bind in a sequential fashion forming a multimeric L10(L12)X complex.

Functionally, forms part of the ribosomal stalk, playing a central role in the interaction of the ribosome with GTP-bound translation factors. The protein is Large ribosomal subunit protein uL10 of Haemophilus influenzae (strain 86-028NP).